The sequence spans 97 residues: Co-chaperonin GroES (97 aa).

The protein belongs to the GroES chaperonin family. Heptamer of 7 subunits arranged in a ring. Interacts with the chaperonin GroEL.

Its subcellular location is the cytoplasm. Functionally, together with the chaperonin GroEL, plays an essential role in assisting protein folding. The GroEL-GroES system forms a nano-cage that allows encapsulation of the non-native substrate proteins and provides a physical environment optimized to promote and accelerate protein folding. GroES binds to the apical surface of the GroEL ring, thereby capping the opening of the GroEL channel. This chain is Co-chaperonin GroES, found in Yersinia pseudotuberculosis serotype O:1b (strain IP 31758).